A 149-amino-acid chain; its full sequence is Pleckstrin homology domain-containing family J member 1 (149 aa).

A PH domain is found at 15 to 108 (PAEKAAEILM…WIEALKRASY (94 aa)).

The sequence is that of Pleckstrin homology domain-containing family J member 1 (PLEKHJ1) from Gallus gallus (Chicken).